The chain runs to 188 residues: MSKKSTNIFTCSGAQHKWIQVVNIDGNIFSIYVCFFVCFFFYLEPSSDDESYEVLDLTEYARRHHWWNRLFGRNSGPLTEKYSVATQIVIGGVSGWCAGFLFQKVGKLAATAVGGGFLLLQIASHGGYIQIDWKRVEKDVNKAKRKIKKEANKTPEINTVIEKSTDFFKKNIVVSGGFVGGFLIGLAS.

The helical transmembrane segment at 21–41 threads the bilayer; sequence VVNIDGNIFSIYVCFFVCFFF. Positions 52–55 match the YXXL motif; that stretch reads YEVL. A run of 3 helical transmembrane segments spans residues 82-102, 109-129, and 167-187; these read YSVA…GFLF, AATA…GGYI, and FFKK…IGLA.

This sequence belongs to the FUN14 family.

Its subcellular location is the mitochondrion outer membrane. In terms of biological role, acts as an activator of hypoxia-induced mitophagy, an important mechanism for mitochondrial quality control. In Xenopus laevis (African clawed frog), this protein is FUN14 domain-containing protein 1B (fundc1-b).